Consider the following 278-residue polypeptide: Large ribosomal subunit protein uL2 (278 aa).

Disordered stretches follow at residues 1–58 (MAIR…GGGH) and 224–278 (VVMN…GKKR). Positions 23-33 (EITRDHPEKSL) are enriched in basic and acidic residues. Positions 37-58 (LHGRGGRNAHGRITTRHKGGGH) are enriched in basic residues. Residues 253 to 268 (PEGRTRKPKKASDKLI) are compositionally biased toward basic and acidic residues. Basic residues predominate over residues 269–278 (VRRRRTGKKR).

The protein belongs to the universal ribosomal protein uL2 family. In terms of assembly, part of the 50S ribosomal subunit. Forms a bridge to the 30S subunit in the 70S ribosome.

In terms of biological role, one of the primary rRNA binding proteins. Required for association of the 30S and 50S subunits to form the 70S ribosome, for tRNA binding and peptide bond formation. It has been suggested to have peptidyltransferase activity; this is somewhat controversial. Makes several contacts with the 16S rRNA in the 70S ribosome. This is Large ribosomal subunit protein uL2 from Mycolicibacterium vanbaalenii (strain DSM 7251 / JCM 13017 / BCRC 16820 / KCTC 9966 / NRRL B-24157 / PYR-1) (Mycobacterium vanbaalenii).